The primary structure comprises 326 residues: Protein farnesyltransferase/geranylgeranyltransferase type-1 subunit alpha (326 aa).

PFTA repeat units follow at residues 55 to 89 (RSPR…ALNH), 90 to 124 (DLFE…KLGP), 126 to 160 (VAGR…ALGG), 161 to 194 (WEDE…QSPL), and 201 to 235 (MRES…DDKE).

The protein belongs to the protein prenyltransferase subunit alpha family. As to quaternary structure, heterodimer of an alpha and a beta subunit. Mg(2+) is required as a cofactor.

It catalyses the reaction L-cysteinyl-[protein] + (2E,6E)-farnesyl diphosphate = S-(2E,6E)-farnesyl-L-cysteinyl-[protein] + diphosphate. The enzyme catalyses geranylgeranyl diphosphate + L-cysteinyl-[protein] = S-geranylgeranyl-L-cysteinyl-[protein] + diphosphate. In terms of biological role, essential subunit of both the farnesyltransferase and the geranylgeranyltransferase complex. Contributes to the transfer of a farnesyl or geranylgeranyl moiety from farnesyl or geranylgeranyl diphosphate to a cysteine at the fourth position from the C-terminus of several proteins having the C-terminal sequence Cys-aliphatic-aliphatic-X. The polypeptide is Protein farnesyltransferase/geranylgeranyltransferase type-1 subunit alpha (FTA) (Arabidopsis thaliana (Mouse-ear cress)).